Here is a 110-residue protein sequence, read N- to C-terminus: Large ribosomal subunit protein uL22 (110 aa).

The protein belongs to the universal ribosomal protein uL22 family. In terms of assembly, part of the 50S ribosomal subunit.

This protein binds specifically to 23S rRNA; its binding is stimulated by other ribosomal proteins, e.g. L4, L17, and L20. It is important during the early stages of 50S assembly. It makes multiple contacts with different domains of the 23S rRNA in the assembled 50S subunit and ribosome. Functionally, the globular domain of the protein is located near the polypeptide exit tunnel on the outside of the subunit, while an extended beta-hairpin is found that lines the wall of the exit tunnel in the center of the 70S ribosome. The protein is Large ribosomal subunit protein uL22 of Haemophilus ducreyi (strain 35000HP / ATCC 700724).